Reading from the N-terminus, the 137-residue chain is Large ribosomal subunit protein eL28 (137 aa).

S2 bears the N-acetylserine mark. Residues K58 and K65 each participate in a glycyl lysine isopeptide (Lys-Gly) (interchain with G-Cter in SUMO2) cross-link. S115 is subject to Phosphoserine.

This sequence belongs to the eukaryotic ribosomal protein eL28 family. In terms of assembly, component of the large ribosomal subunit.

The protein resides in the cytoplasm. Component of the large ribosomal subunit. The ribosome is a large ribonucleoprotein complex responsible for the synthesis of proteins in the cell. This is Large ribosomal subunit protein eL28 (RPL28) from Homo sapiens (Human).